The sequence spans 99 residues: Large ribosomal subunit protein uL23 (99 aa).

It belongs to the universal ribosomal protein uL23 family. In terms of assembly, part of the 50S ribosomal subunit. Contacts protein L29, and trigger factor when it is bound to the ribosome.

Its function is as follows. One of the early assembly proteins it binds 23S rRNA. One of the proteins that surrounds the polypeptide exit tunnel on the outside of the ribosome. Forms the main docking site for trigger factor binding to the ribosome. This Blochmanniella floridana protein is Large ribosomal subunit protein uL23.